The sequence spans 200 residues: Imidazoleglycerol-phosphate dehydratase (200 aa).

Belongs to the imidazoleglycerol-phosphate dehydratase family.

Its subcellular location is the cytoplasm. The catalysed reaction is D-erythro-1-(imidazol-4-yl)glycerol 3-phosphate = 3-(imidazol-4-yl)-2-oxopropyl phosphate + H2O. The protein operates within amino-acid biosynthesis; L-histidine biosynthesis; L-histidine from 5-phospho-alpha-D-ribose 1-diphosphate: step 6/9. The sequence is that of Imidazoleglycerol-phosphate dehydratase from Chlorobium phaeobacteroides (strain DSM 266 / SMG 266 / 2430).